A 425-amino-acid polypeptide reads, in one-letter code: GPI mannosyltransferase 1 (425 aa).

A run of 9 helical transmembrane segments spans residues 11–31 (VIGA…WQDA), 85–105 (FFAF…WLIA), 144–164 (LLGV…VSLA), 166–186 (VILG…PAVV), 233–253 (IHLT…MYIL), 295–315 (FESL…PLVL), 340–360 (SQYF…SSLM), 367–387 (ILVG…GYNL), and 398–418 (GLFL…GIIV).

The protein belongs to the PIGM family.

It is found in the endoplasmic reticulum membrane. Its pathway is glycolipid biosynthesis; glycosylphosphatidylinositol-anchor biosynthesis. In terms of biological role, mannosyltransferase involved in glycosylphosphatidylinositol-anchor biosynthesis. Transfers the first alpha-1,4-mannose to GlcN-acyl-PI during GPI precursor assembly. Required for cell wall integrity. This chain is GPI mannosyltransferase 1 (gpi14), found in Aspergillus fumigatus (strain ATCC MYA-4609 / CBS 101355 / FGSC A1100 / Af293) (Neosartorya fumigata).